The following is a 351-amino-acid chain: Holliday junction branch migration complex subunit RuvB (351 aa).

The large ATPase domain (RuvB-L) stretch occupies residues D4 to Y199. Residues L38, R39, G80, K83, T84, T85, E146 to Y148, R189, Y199, and R236 contribute to the ATP site. Position 84 (T84) interacts with Mg(2+). The small ATPAse domain (RuvB-S) stretch occupies residues T200–R270. The segment at N273–L351 is head domain (RuvB-H). Residues R328 and R333 each contribute to the DNA site.

This sequence belongs to the RuvB family. In terms of assembly, homohexamer. Forms an RuvA(8)-RuvB(12)-Holliday junction (HJ) complex. HJ DNA is sandwiched between 2 RuvA tetramers; dsDNA enters through RuvA and exits via RuvB. An RuvB hexamer assembles on each DNA strand where it exits the tetramer. Each RuvB hexamer is contacted by two RuvA subunits (via domain III) on 2 adjacent RuvB subunits; this complex drives branch migration. In the full resolvosome a probable DNA-RuvA(4)-RuvB(12)-RuvC(2) complex forms which resolves the HJ.

Its subcellular location is the cytoplasm. It carries out the reaction ATP + H2O = ADP + phosphate + H(+). Its function is as follows. The RuvA-RuvB-RuvC complex processes Holliday junction (HJ) DNA during genetic recombination and DNA repair, while the RuvA-RuvB complex plays an important role in the rescue of blocked DNA replication forks via replication fork reversal (RFR). RuvA specifically binds to HJ cruciform DNA, conferring on it an open structure. The RuvB hexamer acts as an ATP-dependent pump, pulling dsDNA into and through the RuvAB complex. RuvB forms 2 homohexamers on either side of HJ DNA bound by 1 or 2 RuvA tetramers; 4 subunits per hexamer contact DNA at a time. Coordinated motions by a converter formed by DNA-disengaged RuvB subunits stimulates ATP hydrolysis and nucleotide exchange. Immobilization of the converter enables RuvB to convert the ATP-contained energy into a lever motion, pulling 2 nucleotides of DNA out of the RuvA tetramer per ATP hydrolyzed, thus driving DNA branch migration. The RuvB motors rotate together with the DNA substrate, which together with the progressing nucleotide cycle form the mechanistic basis for DNA recombination by continuous HJ branch migration. Branch migration allows RuvC to scan DNA until it finds its consensus sequence, where it cleaves and resolves cruciform DNA. This is Holliday junction branch migration complex subunit RuvB from Leuconostoc mesenteroides subsp. mesenteroides (strain ATCC 8293 / DSM 20343 / BCRC 11652 / CCM 1803 / JCM 6124 / NCDO 523 / NBRC 100496 / NCIMB 8023 / NCTC 12954 / NRRL B-1118 / 37Y).